Reading from the N-terminus, the 68-residue chain is Large ribosomal subunit protein bL35 (68 aa).

This sequence belongs to the bacterial ribosomal protein bL35 family.

This Rickettsia conorii (strain ATCC VR-613 / Malish 7) protein is Large ribosomal subunit protein bL35.